Here is a 369-residue protein sequence, read N- to C-terminus: Serpentine receptor class epsilon-2 (369 aa).

Over 1–20 the chain is Extracellular; that stretch reads MLIQYHKISNNDPNRIQLLS. The helical transmembrane segment at 21-41 threads the bilayer; that stretch reads MIFCEIILLIFELFEFAAIIF. The Cytoplasmic portion of the chain corresponds to 42-55; it reads NMSRYQFHFNLKVV. The helical transmembrane segment at 56–76 threads the bilayer; sequence VGYAIFAYWFDIIARITIAFF. At 77 to 118 the chain is on the extracellular side; it reads EIGLFNLDDQTIAVETEKLPWNYKNMFFMLLFCCSTYRVYFM. The chain crosses the membrane as a helical span at residues 119–139; that stretch reads FLICSVTLLLAVERFLATIWV. Residues 140–148 are Cytoplasmic-facing; the sequence is STYESVQHK. A helical transmembrane segment spans residues 149–169; that stretch reads WVSIVLTSTNSIAGIFGSLLF. Topologically, residues 170–178 are extracellular; it reads HYELIFDTA. The chain crosses the membrane as a helical span at residues 179 to 199; the sequence is VWCSLGLCFNFVSIFLYVILF. Residues 200–234 lie on the Cytoplasmic side of the membrane; sequence NSNKSKIELCQTREITQSYTLSLRFQLNENLKIMN. Residues 235–255 form a helical membrane-spanning segment; it reads WIKNSILVVTCFNTLLAGFLI. At 256-274 the chain is on the extracellular side; sequence ASNNEYLKNDYPVLVKCCH. The helical transmembrane segment at 275-295 threads the bilayer; the sequence is TFLNLGIAIYAQVVFFVAILA. Topologically, residues 296–369 are cytoplasmic; the sequence is DRHFRTYFLR…VAKKKRFWRV (74 aa).

The protein belongs to the nematode receptor-like protein sre family.

The protein localises to the cell membrane. This chain is Serpentine receptor class epsilon-2 (sre-2), found in Caenorhabditis elegans.